A 254-amino-acid polypeptide reads, in one-letter code: Proteasome subunit alpha type-7 (254 aa).

Ser-136 is a glycosylation site (O-linked (GlcNAc) serine). Tyr-159 carries the post-translational modification Phosphotyrosine. An N6-acetyllysine modification is found at Lys-233.

Belongs to the peptidase T1A family. As to quaternary structure, the 26S proteasome consists of a 20S proteasome core and two 19S regulatory subunits. The 20S proteasome core is a barrel-shaped complex made of 28 subunits that are arranged in four stacked rings. The two outer rings are each formed by seven alpha subunits, and the two inner rings are formed by seven beta subunits. The proteolytic activity is exerted by three beta-subunits PSMB5, PSMB6 and PSMB7. PSMA7 interacts directly with the PSMG1-PSMG2 heterodimer which promotes 20S proteasome assembly. Interacts with HIF1A. Interacts with RAB7A. Interacts with PRKN. Interacts with ABL1 and ABL2. Interacts with EMAP2. Interacts with MAVS. Ubiquitous.

Its subcellular location is the cytoplasm. It localises to the nucleus. Its function is as follows. Component of the 20S core proteasome complex involved in the proteolytic degradation of most intracellular proteins. This complex plays numerous essential roles within the cell by associating with different regulatory particles. Associated with two 19S regulatory particles, forms the 26S proteasome and thus participates in the ATP-dependent degradation of ubiquitinated proteins. The 26S proteasome plays a key role in the maintenance of protein homeostasis by removing misfolded or damaged proteins that could impair cellular functions, and by removing proteins whose functions are no longer required. Associated with the PA200 or PA28, the 20S proteasome mediates ubiquitin-independent protein degradation. This type of proteolysis is required in several pathways including spermatogenesis (20S-PA200 complex) or generation of a subset of MHC class I-presented antigenic peptides (20S-PA28 complex). Inhibits the transactivation function of HIF-1A under both normoxic and hypoxia-mimicking conditions. The interaction with EMAP2 increases the proteasome-mediated HIF-1A degradation under the hypoxic conditions. Plays a role in hepatitis C virus internal ribosome entry site-mediated translation. Mediates nuclear translocation of the androgen receptor (AR) and thereby enhances androgen-mediated transactivation. Promotes MAVS degradation and thereby negatively regulates MAVS-mediated innate immune response. The protein is Proteasome subunit alpha type-7 (Psma7) of Rattus norvegicus (Rat).